The chain runs to 253 residues: Small ribosomal subunit protein cS22 (253 aa).

The transit peptide at 1–56 (MATFLTNVVSIKPTIFSFQSESFTPLHTRVNVFSSKPFPSLAGTFSRSSRTRFIPY) directs the protein to the chloroplast. RRM domains follow at residues 76–154 (RRVY…ITEK) and 177–253 (YKVY…VNKA).

It belongs to the chloroplast-specific ribosomal protein cS22 family. In terms of assembly, component of the chloroplast small ribosomal subunit (SSU). Mature 70S chloroplast ribosomes of higher plants consist of a small (30S) and a large (50S) subunit. The 30S small subunit contains 1 molecule of ribosomal RNA (16S rRNA) and 24 different proteins. The 50S large subunit contains 3 rRNA molecules (23S, 5S and 4.5S rRNA) and 33 different proteins. Expressed constitutively in roots, stems, flower buds, flowers and leaves.

Its subcellular location is the plastid. The protein localises to the chloroplast. In terms of biological role, component of the chloroplast ribosome (chloro-ribosome), a dedicated translation machinery responsible for the synthesis of chloroplast genome-encoded proteins, including proteins of the transcription and translation machinery and components of the photosynthetic apparatus. May have a role in the recruitment of stored chloroplast mRNAs for active protein synthesis. Bind single strand DNA (ssDNA) and RNA in vitro. Exhibits RNA chaperone activity. Negatively regulates resistance responses to abiotic stresses during seed germination (e.g. salt, dehydration, and low temperature) and seedling growth (e.g. salt). This chain is Small ribosomal subunit protein cS22, found in Arabidopsis thaliana (Mouse-ear cress).